The following is a 152-amino-acid chain: Biogenesis of lysosome-related organelles complex 1 subunit 1 (152 aa).

It belongs to the BLOC1S1 family. As to quaternary structure, component of the biogenesis of lysosome-related organelles complex-1 (BLOC-1). Interacts with BLOS2 and SNX1. As to expression, expressed in the whole plant (at protein level).

It localises to the cytoplasm. It is found in the endosome. Its function is as follows. Component of the biogenesis of lysosome-related organelles complex-1 (BLOC-1), a complex that mediates the vacuolar degradative transport via the intracellular vesicle trafficking from the endosome to the vacuole. Probably regulates the PIN1 and PIN2 homeostasis through its interaction with SNX1. The sequence is that of Biogenesis of lysosome-related organelles complex 1 subunit 1 (BLOS1) from Arabidopsis thaliana (Mouse-ear cress).